The following is a 23-amino-acid chain: Cardioactive peptide CAP23 (23 aa).

Cys7 and Cys19 are oxidised to a cystine.

Belongs to the GBP/PSP1/paralytic peptide family.

In terms of biological role, has excitatory effects on a semi-isolated heart from larval Manduca sexta, causing an inotropic effect at low concentrations of peptide and chronotropic and inotropic effects at high doses. This Spodoptera eridania (Southern armyworm) protein is Cardioactive peptide CAP23.